A 253-amino-acid polypeptide reads, in one-letter code: tRNA pseudouridine synthase A (253 aa).

D53 serves as the catalytic Nucleophile. Position 112 (Y112) interacts with substrate.

This sequence belongs to the tRNA pseudouridine synthase TruA family. Homodimer.

It catalyses the reaction uridine(38/39/40) in tRNA = pseudouridine(38/39/40) in tRNA. In terms of biological role, formation of pseudouridine at positions 38, 39 and 40 in the anticodon stem and loop of transfer RNAs. The polypeptide is tRNA pseudouridine synthase A (Lactococcus lactis subsp. lactis (strain IL1403) (Streptococcus lactis)).